The following is a 296-amino-acid chain: ATP phosphoribosyltransferase (296 aa).

The protein belongs to the ATP phosphoribosyltransferase family.

The protein resides in the cytoplasm. It catalyses the reaction 1-(5-phospho-beta-D-ribosyl)-ATP + diphosphate = 5-phospho-alpha-D-ribose 1-diphosphate + ATP. Its pathway is amino-acid biosynthesis; L-histidine biosynthesis; L-histidine from 5-phospho-alpha-D-ribose 1-diphosphate: step 1/9. Its function is as follows. Catalyzes the condensation of ATP and 5-phosphoribose 1-diphosphate to form N'-(5'-phosphoribosyl)-ATP (PR-ATP). Has a crucial role in the pathway because the rate of histidine biosynthesis seems to be controlled primarily by regulation of the enzymatic activity. This is ATP phosphoribosyltransferase (HIS1) from Yarrowia lipolytica (strain CLIB 122 / E 150) (Yeast).